We begin with the raw amino-acid sequence, 289 residues long: MIIDRLFNEVEKKGNVCVGLDTHLDYIPVNLKEKYQDIDEILFEFNKEIIDKTYDLVPVYKLQIAYYEAYGIKGLLGYKKTIEYLRSIKKITIGDIKRGDISSTAQMYAKAHFEGEFEVDFVTLNPYLGFDSLTPYLKYIESGEKGVFVLLRTSNPGAKDIQYLKVSPKDEYLYYIVGDKLNEIGVKYRGSCGYSSIGAVVGGTHIEEAKEIRNRYKNMFFLIPGYGHQGATGKDVSLYLNKGNGGVINSSRGIITAYKNYKDGDQRFADYARKAVLDMREDIQSERGV.

Residue lysine 97 is the Proton donor of the active site.

It belongs to the OMP decarboxylase family. Type 2 subfamily.

It carries out the reaction orotidine 5'-phosphate + H(+) = UMP + CO2. It participates in pyrimidine metabolism; UMP biosynthesis via de novo pathway; UMP from orotate: step 2/2. The protein is Orotidine 5'-phosphate decarboxylase of Petrotoga mobilis (strain DSM 10674 / SJ95).